The primary structure comprises 215 residues: Ribonuclease S-6 (215 aa).

A signal peptide spans 1-22; it reads MFNLPLTSVFVIFLFALSPIYG. An RNA-binding site is contributed by Q32. Cysteines 38 and 43 form a disulfide. Residue N49 is glycosylated (N-linked (GlcNAc...) asparagine). H53 contributes to the RNA binding site. H53 acts as the Proton donor in catalysis. The N-linked (GlcNAc...) asparagine glycan is linked to N59. Cysteines 67 and 116 form a disulfide. Residues 91–92, R94, F105, 108–109, and 112–113 contribute to the RNA site; these read DL, RE, and KH. Residue E109 is part of the active site. H113 functions as the Proton acceptor in the catalytic mechanism. 2 N-linked (GlcNAc...) asparagine glycosylation sites follow: N160 and N172. 2 cysteine pairs are disulfide-bonded: C175–C204 and C187–C198.

The protein belongs to the RNase T2 family.

Its subcellular location is the secreted. It is found in the extracellular space. The catalysed reaction is a ribonucleotidyl-ribonucleotide-RNA + H2O = a 3'-end 3'-phospho-ribonucleotide-RNA + a 5'-end dephospho-ribonucleoside-RNA + H(+). Functionally, self-incompatibility (SI) is the inherited ability of a flowering plant to prevent self-fertilization by discriminating between self and non-self pollen during pollination. In many species of the Solanaceae, self-incompatibility is controlled by the single, multiallelic locus S. This stylar glycoprotein is associated with expression of self-incompatibility in potato. In Nicotiana alata (Winged tobacco), this protein is Ribonuclease S-6.